We begin with the raw amino-acid sequence, 165 residues long: Nucleotide-binding protein CHY_1197 (165 aa).

The protein belongs to the YajQ family.

Functionally, nucleotide-binding protein. The protein is Nucleotide-binding protein CHY_1197 of Carboxydothermus hydrogenoformans (strain ATCC BAA-161 / DSM 6008 / Z-2901).